A 333-amino-acid polypeptide reads, in one-letter code: L-lactate dehydrogenase B chain (333 aa).

Residues 29-57 and Arg99 each bind NAD(+); that span reads GQVGMACAVSILGKSLCDELALVDVLEDK. 3 residues coordinate substrate: Arg106, Asn138, and Arg169. An NAD(+)-binding site is contributed by Asn138. Residue His193 is the Proton acceptor of the active site. Thr248 lines the substrate pocket.

Belongs to the LDH/MDH superfamily. LDH family. Homotetramer.

It is found in the cytoplasm. The enzyme catalyses (S)-lactate + NAD(+) = pyruvate + NADH + H(+). It participates in fermentation; pyruvate fermentation to lactate; (S)-lactate from pyruvate: step 1/1. Interconverts simultaneously and stereospecifically pyruvate and lactate with concomitant interconversion of NADH and NAD(+). The polypeptide is L-lactate dehydrogenase B chain (LDHB) (Caiman crocodilus apaporiensis (Rio Apaporis caiman)).